The following is a 331-amino-acid chain: Probable transcriptional regulatory protein At2g25830 (331 aa).

The protein belongs to the TACO1 family.

The chain is Probable transcriptional regulatory protein At2g25830 from Arabidopsis thaliana (Mouse-ear cress).